The sequence spans 335 residues: DNA-directed RNA polymerase subunit alpha (335 aa).

Residues 1–231 (MVREKITVST…DLLIPFLHTK (231 aa)) are alpha N-terminal domain (alpha-NTD). The segment at 263-335 (KKMALKSIFI…FVIDLPKNKF (73 aa)) is alpha C-terminal domain (alpha-CTD).

It belongs to the RNA polymerase alpha chain family. In plastids the minimal PEP RNA polymerase catalytic core is composed of four subunits: alpha, beta, beta', and beta''. When a (nuclear-encoded) sigma factor is associated with the core the holoenzyme is formed, which can initiate transcription.

It localises to the plastid. Its subcellular location is the chloroplast. The catalysed reaction is RNA(n) + a ribonucleoside 5'-triphosphate = RNA(n+1) + diphosphate. Functionally, DNA-dependent RNA polymerase catalyzes the transcription of DNA into RNA using the four ribonucleoside triphosphates as substrates. The protein is DNA-directed RNA polymerase subunit alpha of Lactuca sativa (Garden lettuce).